The following is a 243-amino-acid chain: Ubiquinone/menaquinone biosynthesis C-methyltransferase UbiE (243 aa).

Residues Thr69, Asp90, and 116–117 contribute to the S-adenosyl-L-methionine site; that span reads DA.

It belongs to the class I-like SAM-binding methyltransferase superfamily. MenG/UbiE family.

It catalyses the reaction a 2-demethylmenaquinol + S-adenosyl-L-methionine = a menaquinol + S-adenosyl-L-homocysteine + H(+). The catalysed reaction is a 2-methoxy-6-(all-trans-polyprenyl)benzene-1,4-diol + S-adenosyl-L-methionine = a 5-methoxy-2-methyl-3-(all-trans-polyprenyl)benzene-1,4-diol + S-adenosyl-L-homocysteine + H(+). Its pathway is quinol/quinone metabolism; menaquinone biosynthesis; menaquinol from 1,4-dihydroxy-2-naphthoate: step 2/2. It functions in the pathway cofactor biosynthesis; ubiquinone biosynthesis. In terms of biological role, methyltransferase required for the conversion of demethylmenaquinol (DMKH2) to menaquinol (MKH2) and the conversion of 2-polyprenyl-6-methoxy-1,4-benzoquinol (DDMQH2) to 2-polyprenyl-3-methyl-6-methoxy-1,4-benzoquinol (DMQH2). The protein is Ubiquinone/menaquinone biosynthesis C-methyltransferase UbiE of Cupriavidus necator (strain ATCC 17699 / DSM 428 / KCTC 22496 / NCIMB 10442 / H16 / Stanier 337) (Ralstonia eutropha).